The primary structure comprises 726 residues: Uracil catabolism protein 2 (726 aa).

Positions 24-53 (CGVCRKFKTRCDFEPLVGKCHRCNVLRLEC) form a DNA-binding region, zn(2)-C6 fungal-type. Disordered regions lie at residues 152–183 (AGMG…FVNG) and 629–681 (SGRL…SGAD). Residues 161 to 170 (YDDDDDGDDD) are compositionally biased toward acidic residues. Positions 640-679 (RGSPSMTPGFQQSVQSSSALQGSKAGSPQSARSVNSQGSG) are enriched in polar residues.

It belongs to the URC2 family.

The protein resides in the nucleus. Functionally, probable transcriptional activator involved in uracil catabolism. In Lachancea kluyveri (Yeast), this protein is Uracil catabolism protein 2 (URC2).